Reading from the N-terminus, the 249-residue chain is tRNA (guanine-N(1)-)-methyltransferase (249 aa).

S-adenosyl-L-methionine is bound by residues glycine 113 and 133-138 (IGDFVV).

This sequence belongs to the RNA methyltransferase TrmD family. As to quaternary structure, homodimer.

Its subcellular location is the cytoplasm. It catalyses the reaction guanosine(37) in tRNA + S-adenosyl-L-methionine = N(1)-methylguanosine(37) in tRNA + S-adenosyl-L-homocysteine + H(+). Specifically methylates guanosine-37 in various tRNAs. The protein is tRNA (guanine-N(1)-)-methyltransferase of Neisseria gonorrhoeae (strain ATCC 700825 / FA 1090).